A 379-amino-acid chain; its full sequence is MNVFWFLPTHGDGHYLGTTKGARPVTLNYLKQVAQAADDLGYYGVLIPTGRSCEDSWVIASALVPLTERLKYLVAIRPGIISPTVSARMAATLDRLSGGRLLINVVTGGDPDENRGDGSFLDHSERYEVTDEFLKIWRRVLQGEAVDFEGKHLRVQNAKALYPPIQKPYPPLYFGGSSDAAHDLAADQVDVYLTWGEPPAAVAQKLADVRERAARKGRTVKFGIRLHVIVRETSEEAWKAASTLIEHISDETIAAAQKSFSRFDSEGQRRMAALHDGRRDNLEIAPNLWAGVGLVRGGAGTALVGNPQEVAARIKEYADLGIDSFIFSGYPHLEEAYRFAELVFPLLPEPYASLAGRGITNLTGPFGEMIANDLPPQAK.

It belongs to the SsuD family.

It carries out the reaction an alkanesulfonate + FMNH2 + O2 = an aldehyde + FMN + sulfite + H2O + 2 H(+). Its function is as follows. Catalyzes the desulfonation of aliphatic sulfonates. This chain is Alkanesulfonate monooxygenase, found in Pseudomonas savastanoi pv. phaseolicola (strain 1448A / Race 6) (Pseudomonas syringae pv. phaseolicola (strain 1448A / Race 6)).